A 369-amino-acid chain; its full sequence is UDP-3-O-acylglucosamine N-acyltransferase (369 aa).

Residue histidine 263 is the Proton acceptor of the active site.

Belongs to the transferase hexapeptide repeat family. LpxD subfamily. In terms of assembly, homotrimer.

It carries out the reaction a UDP-3-O-[(3R)-3-hydroxyacyl]-alpha-D-glucosamine + a (3R)-hydroxyacyl-[ACP] = a UDP-2-N,3-O-bis[(3R)-3-hydroxyacyl]-alpha-D-glucosamine + holo-[ACP] + H(+). It participates in bacterial outer membrane biogenesis; LPS lipid A biosynthesis. Functionally, catalyzes the N-acylation of UDP-3-O-acylglucosamine using 3-hydroxyacyl-ACP as the acyl donor. Is involved in the biosynthesis of lipid A, a phosphorylated glycolipid that anchors the lipopolysaccharide to the outer membrane of the cell. The sequence is that of UDP-3-O-acylglucosamine N-acyltransferase from Burkholderia vietnamiensis (strain G4 / LMG 22486) (Burkholderia cepacia (strain R1808)).